Reading from the N-terminus, the 181-residue chain is Epidermin decarboxylase (181 aa).

Histidine 67 is an active-site residue.

This sequence belongs to the HFCD (homooligomeric flavin containing Cys decarboxylase) superfamily. As to quaternary structure, homododecamer. It depends on FMN as a cofactor.

Catalyzes the removal of two reducing equivalents (oxidative decarboxylation) from the cysteine residue of the C-terminal meso-lanthionine of epidermin to form a --C==C-- double bond. This chain is Epidermin decarboxylase (epiD), found in Staphylococcus epidermidis.